Here is a 432-residue protein sequence, read N- to C-terminus: Glutamate-1-semialdehyde 2,1-aminomutase (432 aa).

K272 carries the N6-(pyridoxal phosphate)lysine modification.

It belongs to the class-III pyridoxal-phosphate-dependent aminotransferase family. HemL subfamily. As to quaternary structure, homodimer. Requires pyridoxal 5'-phosphate as cofactor.

It is found in the cytoplasm. It catalyses the reaction (S)-4-amino-5-oxopentanoate = 5-aminolevulinate. It participates in porphyrin-containing compound metabolism; protoporphyrin-IX biosynthesis; 5-aminolevulinate from L-glutamyl-tRNA(Glu): step 2/2. It functions in the pathway porphyrin-containing compound metabolism; chlorophyll biosynthesis. In Cyanothece sp. (strain PCC 7425 / ATCC 29141), this protein is Glutamate-1-semialdehyde 2,1-aminomutase.